We begin with the raw amino-acid sequence, 356 residues long: Phosphate acyltransferase (356 aa).

The protein belongs to the PlsX family. Homodimer. Probably interacts with PlsY.

Its subcellular location is the cytoplasm. It catalyses the reaction a fatty acyl-[ACP] + phosphate = an acyl phosphate + holo-[ACP]. Its pathway is lipid metabolism; phospholipid metabolism. Its function is as follows. Catalyzes the reversible formation of acyl-phosphate (acyl-PO(4)) from acyl-[acyl-carrier-protein] (acyl-ACP). This enzyme utilizes acyl-ACP as fatty acyl donor, but not acyl-CoA. The polypeptide is Phosphate acyltransferase (Shigella boydii serotype 4 (strain Sb227)).